Reading from the N-terminus, the 893-residue chain is Zinc finger protein 281 (893 aa).

Disordered stretches follow at residues 1–113 (MKIG…FPSQ), 126–148 (IKQEKPADPEEQPSHHHHHHHHY), 153–172 (AGAEERSPGLGGGEGGSHGV), and 198–251 (SGSR…GAVL). Residue Lys-2 forms a Glycyl lysine isopeptide (Lys-Gly) (interchain with G-Cter in SUMO2) linkage. The span at 7 to 36 (FLSGGGGPSSSGGSGSGGSSGSASGGSGGG) shows a compositional bias: gly residues. Residues Lys-100 and Lys-127 each participate in a glycyl lysine isopeptide (Lys-Gly) (interchain with G-Cter in SUMO2) cross-link. Residues 127 to 139 (KQEKPADPEEQPS) are compositionally biased toward basic and acidic residues. The segment covering 161 to 170 (GLGGGEGGSH) has biased composition (gly residues). The segment covering 201-216 (RTDEHGNQEPKQDANV) has biased composition (basic and acidic residues). Glycyl lysine isopeptide (Lys-Gly) (interchain with G-Cter in SUMO2) cross-links involve residues Lys-211, Lys-217, Lys-223, Lys-230, Lys-240, and Lys-256. 3 C2H2-type zinc fingers span residues 258–280 (HICDHCSAAFRSSYHLRRHVLIH), 286–308 (FQCSQCSMGFIQKYLLQRHEKIH), and 314–336 (FGCDQCSMKFIQKYHMERHKRTH). Glycyl lysine isopeptide (Lys-Gly) (interchain with G-Cter in SUMO2) cross-links involve residues Lys-298 and Lys-322. Residues 342-364 (YKCDTCQQYFSRTDRLLKHRRTC) form a C2H2-type 4; atypical zinc finger. A Glycyl lysine isopeptide (Lys-Gly) (interchain with G-Cter in SUMO2) cross-link involves residue Lys-370. The tract at residues 371-425 (GAASAEPGSSNHNSMGNLAVLSQGNTSSSRRKSKSKSIAIENKEHKTGKTNESQM) is disordered. A compositionally biased stretch (polar residues) spans 377–396 (PGSSNHNSMGNLAVLSQGNT). Ser-392 is subject to Phosphoserine. Glycyl lysine isopeptide (Lys-Gly) (interchain with G-Cter in SUMO2) cross-links involve residues Lys-406, Lys-413, Lys-457, and Lys-474. Ser-481 bears the Phosphoserine mark. Glycyl lysine isopeptide (Lys-Gly) (interchain with G-Cter in SUMO2) cross-links involve residues Lys-490, Lys-495, Lys-536, Lys-596, Lys-614, and Lys-619. The interval 613-658 (GKSETQKEDPFNLTEPRVDLHTSGEHSELVQEENLSPGTQTPSNDK) is disordered. Basic and acidic residues predominate over residues 616–641 (ETQKEDPFNLTEPRVDLHTSGEHSEL). The segment covering 645–658 (ENLSPGTQTPSNDK) has biased composition (polar residues). Position 648 is a phosphoserine (Ser-648). Residues Lys-658 and Lys-667 each participate in a glycyl lysine isopeptide (Lys-Gly) (interchain with G-Cter in SUMO2) cross-link. Over residues 775–813 (SSAFQSSSQKLTSQKEQQKNLESSTSFQIPSQELASQID) the composition is skewed to polar residues. Residues 775 to 815 (SSAFQSSSQKLTSQKEQQKNLESSTSFQIPSQELASQIDPQ) are disordered. At Ser-782 the chain carries Phosphoserine. Residues Lys-784, Lys-789, and Lys-793 each participate in a glycyl lysine isopeptide (Lys-Gly) (interchain with G-Cter in SUMO2) cross-link. At Ser-805 the chain carries Phosphoserine. Residues Lys-816 and Lys-838 each participate in a glycyl lysine isopeptide (Lys-Gly) (interchain with G-Cter in SUMO2) cross-link. A Phosphothreonine modification is found at Thr-886.

The protein belongs to the krueppel C2H2-type zinc-finger protein family. As to quaternary structure, interacts with NANOG. Associates with the NuRD complex.

The protein resides in the nucleus. Its function is as follows. Transcription repressor that plays a role in regulation of embryonic stem cells (ESCs) differentiation. Required for ESCs differentiation and acts by mediating autorepression of NANOG in ESCs: binds to the NANOG promoter and promotes association of NANOG protein to its own promoter and recruits the NuRD complex, which deacetylates histones. Not required for establishement and maintenance of ESCs. Represses the transcription of a number of genes including GAST, ODC1 and VIM. Binds to the G-rich box in the enhancer region of these genes. This Mus musculus (Mouse) protein is Zinc finger protein 281 (Znf281).